Reading from the N-terminus, the 544-residue chain is Zinc finger and BTB domain-containing protein 7B (544 aa).

The BTB domain occupies 34-115 (CDLTIRTQGL…AYTATLTTSS (82 aa)). Serine 150 carries the post-translational modification Phosphoserine. 2 disordered regions span residues 171–221 (TTAS…ARAN) and 244–314 (GRLG…EDPI). Residues 186-200 (PQVPLLPPPPPPPRP) are compositionally biased toward pro residues. A compositionally biased stretch (basic residues) spans 201 to 210 (VARRSRKPRK). N6-acetyllysine; by EP300; alternate is present on residues lysine 210 and lysine 216. Residues lysine 210 and lysine 216 each participate in a glycyl lysine isopeptide (Lys-Gly) (interchain with G-Cter in ubiquitin); alternate cross-link. Acidic residues predominate over residues 277–286 (FEGEEEEEEM). The residue at position 339 (lysine 339) is an N6-acetyllysine; by EP300; alternate. Lysine 339 participates in a covalent cross-link: Glycyl lysine isopeptide (Lys-Gly) (interchain with G-Cter in ubiquitin); alternate. Residues 348-404 (MPQECPVCHKIIHGAGKLPRHMRTHTGEKPFACEVCGVRFTRNDKLKIHMRKHTGER) are required for interaction with and acetylation by EP300. A C2H2-type 1 zinc finger spans residues 350 to 372 (QECPVCHKIIHGAGKLPRHMRTH). Threonine 373 is modified (phosphothreonine). C2H2-type zinc fingers lie at residues 378–400 (FACEVCGVRFTRNDKLKIHMRKH) and 406–428 (YSCPHCPARFLHSYDLKNHMHLH). The segment at 434 to 458 (YECHLCHKAFAKEDHLQRHLKGQNC) adopts a C2H2-type 4; atypical zinc-finger fold. Disordered stretches follow at residues 465–493 (RRRKDDVAAPHYPPPSTTTSSPAGLDLSN) and 507–544 (WEQSATTGPPVTTQGPPEEEEEEGTPTTPQAEGAMESS). 2 stretches are compositionally biased toward low complexity: residues 511-522 (ATTGPPVTTQGP) and 531-544 (TPTTPQAEGAMESS).

Homodimerizes. Interacts with NCL, NEDD4 and YBX1. Interacts with HNRNPU (via RNA-binding RGG-box region); the interaction facilitates the recruitment of long non-coding RNA Blnc1 by ZBTB7B. Interacts with HDAC4 and HDAC5; the interaction allows the recruitment of HDAC4 and HDAC5 on CD8 loci for deacetylation and possible inhibition of CD8 genes expression. Acetylated directly and specifically by EP300. EP300-mediated acetylation of Lys-210, Lys-216 and Lys-339 stabilizes the protein by antagonizing ubiquitin conjugation. Post-translationally, ubiquitinated, leading to proteasomal degradation. Competes with acetylation on Lys-210, Lys-216 and Lys-339. Widely expressed, with a higher level in skin. Expressed in thymus. Restricted to CD4 cells (mature single positive CD4(+) and intermediate CD4(+)CD8(+) cells). Expressed in the luminal epithelial cells in the mammary glands where is up-regulated at late pregnancy and lactation. Expression is enriched in brown fat.

The protein localises to the nucleus. Functionally, transcription regulator that acts as a key regulator of lineage commitment of immature T-cell precursors. Exerts distinct biological functions in the mammary epithelial cells and T cells in a tissue-specific manner. Necessary and sufficient for commitment of CD4 lineage, while its absence causes CD8 commitment. Development of immature T-cell precursors (thymocytes) to either the CD4 helper or CD8 killer T-cell lineages correlates precisely with their T-cell receptor specificity for major histocompatibility complex class II or class I molecules, respectively. Cross-antagonism between ZBTB7B and CBF complexes are determinative to CD4 versus CD8 cell fate decision. Suppresses RUNX3 expression and imposes CD4+ lineage fate by inducing the SOCS suppressors of cytokine signaling. induces, as a transcriptional activator, SOCS genes expression which represses RUNX3 expression and promotes the CD4+ lineage fate. During CD4 lineage commitment, associates with multiple sites at the CD8 locus, acting as a negative regulator of the CD8 promoter and enhancers by epigenetic silencing through the recruitment of class II histone deacetylases, such as HDAC4 and HDAC5, to these loci. Regulates the development of IL17-producing CD1d-restricted naural killer (NK) T cells. Also functions as an important metabolic regulator in the lactating mammary glands. Critical feed-forward regulator of insulin signaling in mammary gland lactation, directly regulates expression of insulin receptor substrate-1 (IRS-1) and insulin-induced Akt-mTOR-SREBP signaling. Transcriptional repressor of the collagen COL1A1 and COL1A2 genes. May also function as a repressor of fibronectin and possibly other extracellular matrix genes. Potent driver of brown fat development, thermogenesis and cold-induced beige fat formation. Recruits the brown fat lncRNA 1 (Blnc1):HNRNPU ribonucleoprotein complex to activate thermogenic gene expression in brown and beige adipocytes. The chain is Zinc finger and BTB domain-containing protein 7B from Mus musculus (Mouse).